Consider the following 442-residue polypeptide: Tryptophan synthase beta chain 2 (442 aa).

Position 122 is an N6-(pyridoxal phosphate)lysine (Lys-122).

This sequence belongs to the TrpB family. As to quaternary structure, tetramer of two alpha and two beta chains. The cofactor is pyridoxal 5'-phosphate.

The catalysed reaction is (1S,2R)-1-C-(indol-3-yl)glycerol 3-phosphate + L-serine = D-glyceraldehyde 3-phosphate + L-tryptophan + H2O. It functions in the pathway amino-acid biosynthesis; L-tryptophan biosynthesis; L-tryptophan from chorismate: step 5/5. In terms of biological role, the beta subunit is responsible for the synthesis of L-tryptophan from indole and L-serine. The sequence is that of Tryptophan synthase beta chain 2 (trpB2) from Methanosarcina acetivorans (strain ATCC 35395 / DSM 2834 / JCM 12185 / C2A).